The chain runs to 1020 residues: Calcium-transporting ATPase 10, plasma membrane-type (1020 aa).

Over 1–175 (MESYLEENFG…FVWEALQDTT (175 aa)) the chain is Cytoplasmic. The interval 21–32 (ALRRWRKLCGVV) is interaction with calmodulin. 2 helical membrane passes run 176-196 (LIILAVCAFVSLVVGIAMEGW) and 199-219 (GAHDGLGIVASILLVVFVTAT). Residues 220 to 263 (SDYRQSLQFKDLDKEKKKIQVQVTRNGFRQRLSIYDLLPGDVVH) are Cytoplasmic-facing. Transmembrane regions (helical) follow at residues 264-284 (LAIGDQVPADGLFISGFSLLI) and 352-372 (GVATIIGKIGLFFAVITFIVL). Over 373–400 (SQGLISKKYHEGLLLSWSGDDALEMLEH) the chain is Cytoplasmic. A helical transmembrane segment spans residues 401–421 (FAIAVTIVVVAVPEGLPLAVT). Asp456 (4-aspartylphosphate intermediate) is an active-site residue. Mg(2+)-binding residues include Asp758 and Asp762. Residues 843 to 863 (LTAVQLLWVNMIMDTLGALAL) traverse the membrane as a helical segment. The Cytoplasmic segment spans residues 864–887 (ATEPPNDDLMKREPVGRTGKFITN). Transmembrane regions (helical) follow at residues 888–907 (VMWRNILGQSFYQFIVMWYL) and 924–944 (VVLNTIIFNSFVFCQVFNEIS). Residues 945–961 (SREMEKINVLRGILKNY) lie on the Cytoplasmic side of the membrane. Transmembrane regions (helical) follow at residues 962–982 (VFLGVLTSTVVFQFIMVQFLG) and 995–1015 (WIASVLLGLIGMPISAIIKLL). At 1016 to 1020 (PVGSS) the chain is on the cytoplasmic side.

It belongs to the cation transport ATPase (P-type) (TC 3.A.3) family. Type IIB subfamily.

Its subcellular location is the membrane. It catalyses the reaction Ca(2+)(in) + ATP + H2O = Ca(2+)(out) + ADP + phosphate + H(+). With respect to regulation, activated by calmodulin. This magnesium-dependent enzyme catalyzes the hydrolysis of ATP coupled with the translocation of calcium from the cytosol out of the cell, into the endoplasmic reticulum, or into organelles. This Oryza sativa subsp. japonica (Rice) protein is Calcium-transporting ATPase 10, plasma membrane-type.